Reading from the N-terminus, the 110-residue chain is Hydrogenase maturation factor HypA (110 aa).

His-2 is a Ni(2+) binding site. Residues Cys-70, Cys-73, Cys-86, and Cys-89 each contribute to the Zn(2+) site.

It belongs to the HypA/HybF family.

In terms of biological role, involved in the maturation of [NiFe] hydrogenases. Required for nickel insertion into the metal center of the hydrogenase. The protein is Hydrogenase maturation factor HypA of Geobacter metallireducens (strain ATCC 53774 / DSM 7210 / GS-15).